Here is a 258-residue protein sequence, read N- to C-terminus: uncharacterized protein (258 aa).

Position 36–43 (36–43 (GKAGTGKS)) interacts with ATP.

This sequence belongs to the IIV-6 075L family.

This is an uncharacterized protein from Acheta domesticus (House cricket).